Here is a 363-residue protein sequence, read N- to C-terminus: Chalcone synthase B (363 aa).

Cys-170 is a catalytic residue.

Belongs to the thiolase-like superfamily. Chalcone/stilbene synthases family.

The catalysed reaction is (E)-4-coumaroyl-CoA + 3 malonyl-CoA + 3 H(+) = 2',4,4',6'-tetrahydroxychalcone + 3 CO2 + 4 CoA. It functions in the pathway secondary metabolite biosynthesis; flavonoid biosynthesis. Its function is as follows. The primary product of this enzyme is 4,2',4',6'-tetrahydroxychalcone (also termed naringenin-chalcone or chalcone) which can under specific conditions spontaneously isomerize into naringenin. The chain is Chalcone synthase B (CHSB) from Ipomoea cordatotriloba (Tievine).